We begin with the raw amino-acid sequence, 944 residues long: Neutral alpha-glucosidase AB (944 aa).

The first 32 residues, 1 to 32 (MAAIAAVAARRRRSWLSLVLAYLGVCLGITLA), serve as a signal peptide directing secretion. C41 and C47 are joined by a disulfide. Phosphoserine is present on S52. N-linked (GlcNAc...) asparagine glycosylation occurs at N97. Residues 180–238 (HQRAPRVPQESKDPAEGNGAQPEATPGDGDKPEETQEKAEKDEPGAWEETFKTHSDSKP) form a disordered region. A compositionally biased stretch (basic and acidic residues) spans 207–236 (DGDKPEETQEKAEKDEPGAWEETFKTHSDS). The substrate site is built by D283 and D429. D542 serves as the catalytic Nucleophile. R602 provides a ligand contact to substrate. Residue D618 is the Proton donor of the active site. A disulfide bridge links C633 with C644. H676 contacts substrate.

Belongs to the glycosyl hydrolase 31 family. As to quaternary structure, heterodimer of a catalytic alpha subunit (GANAB) and a beta subunit (PRKCSH). Binds glycosylated PTPRC.

It is found in the endoplasmic reticulum. The protein resides in the golgi apparatus. It localises to the melanosome. The enzyme catalyses N(4)-(alpha-D-Glc-(1-&gt;3)-alpha-D-Man-(1-&gt;2)-alpha-D-Man-(1-&gt;2)-alpha-D-Man-(1-&gt;3)-[alpha-D-Man-(1-&gt;2)-alpha-D-Man-(1-&gt;3)-[alpha-D-Man-(1-&gt;2)-alpha-D-Man-(1-&gt;6)]-alpha-D-Man-(1-&gt;6)]-beta-D-Man-(1-&gt;4)-beta-D-GlcNAc-(1-&gt;4)-beta-D-GlcNAc)-L-asparaginyl-[protein] + H2O = N(4)-(alpha-D-Man-(1-&gt;2)-alpha-D-Man-(1-&gt;2)-alpha-D-Man-(1-&gt;3)-[alpha-D-Man-(1-&gt;2)-alpha-D-Man-(1-&gt;3)-[alpha-D-Man-(1-&gt;2)-alpha-D-Man-(1-&gt;6)]-alpha-D-Man-(1-&gt;6)]-beta-D-Man-(1-&gt;4)-beta-D-GlcNAc-(1-&gt;4)-beta-D-GlcNAc)-L-asparaginyl-[protein] (N-glucan mannose isomer 9A1,2,3B1,2,3) + beta-D-glucose. It catalyses the reaction N(4)-(alpha-D-Glc-(1-&gt;3)-alpha-D-Glc-(1-&gt;3)-alpha-D-Man-(1-&gt;2)-alpha-D-Man-(1-&gt;2)-alpha-D-Man-(1-&gt;3)-[alpha-D-Man-(1-&gt;2)-alpha-D-Man-(1-&gt;3)-[alpha-D-Man-(1-&gt;2)-alpha-D-Man-(1-&gt;6)]-alpha-D-Man-(1-&gt;6)]-beta-D-Man-(1-&gt;4)-beta-D-GlcNAc-(1-&gt;4)-beta-D-GlcNAc)-L-asparaginyl-[protein] + H2O = N(4)-(alpha-D-Glc-(1-&gt;3)-alpha-D-Man-(1-&gt;2)-alpha-D-Man-(1-&gt;2)-alpha-D-Man-(1-&gt;3)-[alpha-D-Man-(1-&gt;2)-alpha-D-Man-(1-&gt;3)-[alpha-D-Man-(1-&gt;2)-alpha-D-Man-(1-&gt;6)]-alpha-D-Man-(1-&gt;6)]-beta-D-Man-(1-&gt;4)-beta-D-GlcNAc-(1-&gt;4)-beta-D-GlcNAc)-L-asparaginyl-[protein] + beta-D-glucose. It participates in glycan metabolism; N-glycan metabolism. Its function is as follows. Catalytic subunit of glucosidase II that cleaves sequentially the 2 innermost alpha-1,3-linked glucose residues from the Glc(2)Man(9)GlcNAc(2) oligosaccharide precursor of immature glycoproteins. Required for PKD1/Polycystin-1 and PKD2/Polycystin-2 maturation and localization to the cell surface and cilia. The protein is Neutral alpha-glucosidase AB of Mus musculus (Mouse).